A 213-amino-acid polypeptide reads, in one-letter code: Chloramphenicol acetyltransferase 3 (213 aa).

Catalysis depends on H189, which acts as the Proton acceptor.

This sequence belongs to the chloramphenicol acetyltransferase family. Homotrimer.

It catalyses the reaction chloramphenicol + acetyl-CoA = chloramphenicol 3-acetate + CoA. In terms of biological role, this enzyme is an effector of chloramphenicol resistance in bacteria. The protein is Chloramphenicol acetyltransferase 3 (cat3) of Escherichia coli.